The sequence spans 426 residues: MSKSENLYSAARELIPGGVNSPVRAFTGVGGTPLFIEKADGAYLYDVDGKAYIDYVGSWGPMVLGHNHPAIRNAVIEAAERGLSFGAPTEMEVKMAQLVTELVPTMDMVRMVNSGTEATMSAIRLARGFTGRDKIIKFEGCYHGHADCLLVKAGSGALTLGQPNSPGVPADFAKHTLTCTYNDLASVRAAFEQYPQEIACIIVEPVAGNMNCVPPLPEFLPGLRALCDEFGALLIIDEVMTGFRVALAGAQDYFAVVPDLTCLGKIIGGGMPVGAFGGRRDVMDALAPTGPVYQAGTLSGNPIAMAAGFACLNEVAQPGIHETLDELTTRLAEGLLEAAEEAGIPLVVNHVGGMFGIFFTDAESVTCYQDVMACDVERFKRFFHMMLDEGVYLAPSAFEAGFMSVAHSMEDINNTIDAARRVFAKL.

The residue at position 265 (lysine 265) is an N6-(pyridoxal phosphate)lysine.

It belongs to the class-III pyridoxal-phosphate-dependent aminotransferase family. HemL subfamily. In terms of assembly, homodimer. The cofactor is pyridoxal 5'-phosphate.

The protein resides in the cytoplasm. The catalysed reaction is (S)-4-amino-5-oxopentanoate = 5-aminolevulinate. Its pathway is porphyrin-containing compound metabolism; protoporphyrin-IX biosynthesis; 5-aminolevulinate from L-glutamyl-tRNA(Glu): step 2/2. This Shigella flexneri serotype 5b (strain 8401) protein is Glutamate-1-semialdehyde 2,1-aminomutase.